A 661-amino-acid chain; its full sequence is Fructose-1,6-bisphosphatase class 3 (661 aa).

It belongs to the FBPase class 3 family. Mn(2+) serves as cofactor.

The catalysed reaction is beta-D-fructose 1,6-bisphosphate + H2O = beta-D-fructose 6-phosphate + phosphate. The protein operates within carbohydrate biosynthesis; gluconeogenesis. This chain is Fructose-1,6-bisphosphatase class 3, found in Clostridioides difficile (strain 630) (Peptoclostridium difficile).